The following is a 158-amino-acid chain: Regulator of sigma D (158 aa).

The protein belongs to the Rsd/AlgQ family. Interacts with RpoD.

The protein resides in the cytoplasm. In terms of biological role, binds RpoD and negatively regulates RpoD-mediated transcription activation by preventing the interaction between the primary sigma factor RpoD with the catalytic core of the RNA polymerase and with promoter DNA. May be involved in replacement of the RNA polymerase sigma subunit from RpoD to RpoS during the transition from exponential growth to the stationary phase. This is Regulator of sigma D from Shigella boydii serotype 4 (strain Sb227).